Consider the following 276-residue polypeptide: Putative translation initiation factor eIF-2B subunit 2-like (276 aa).

It belongs to the eIF-2B alpha/beta/delta subunits family. Complex of two different subunits.

Catalyzes the exchange of initiation factor 2-bound GDP for GTP. The sequence is that of Putative translation initiation factor eIF-2B subunit 2-like from Pyrococcus furiosus (strain ATCC 43587 / DSM 3638 / JCM 8422 / Vc1).